Consider the following 486-residue polypeptide: Maintenance of mitochondrial morphology protein 1 (486 aa).

Residues 1–23 are Lumenal-facing; the sequence is MSQHSQYDAPGVPVQPSLSFTQG. Residues 24 to 44 form a helical membrane-spanning segment; sequence FLLGQLSVVLLIGAFIKFFIF. Over 45–486 the chain is Cytoplasmic; the sequence is GEAPAPPSRG…PGSMPGGRAQ (442 aa). Positions 52–103 are disordered; the sequence is SRGLASRTASHHRSYSINQGDNNVSNNNTSGGSPRTLCEKPSTSNVLRPVPS. Low complexity predominate over residues 67–84; sequence SINQGDNNVSNNNTSGGS. Positions 92 to 103 are enriched in polar residues; the sequence is PSTSNVLRPVPS. Residues 140 to 389 enclose the SMP-LTD domain; sequence QPESLDWFNV…EPRVQVVGLP (250 aa). Positions 413–426 are enriched in low complexity; that stretch reads AAASASSRGGAPEA. The interval 413 to 486 is disordered; it reads AAASASSRGG…PGSMPGGRAQ (74 aa).

The protein belongs to the MMM1 family. Homodimer. Component of the ER-mitochondria encounter structure (ERMES) or MDM complex, composed of mmm1, mdm10, mdm12 and mdm34. A mmm1 homodimer associates with one molecule of mdm12 on each side in a pairwise head-to-tail manner, and the SMP-LTD domains of mmm1 and mdm12 generate a continuous hydrophobic tunnel for phospholipid trafficking.

It localises to the endoplasmic reticulum membrane. Its function is as follows. Component of the ERMES/MDM complex, which serves as a molecular tether to connect the endoplasmic reticulum (ER) and mitochondria. Components of this complex are involved in the control of mitochondrial shape and protein biogenesis, and function in nonvesicular lipid trafficking between the ER and mitochondria. The mdm12-mmm1 subcomplex functions in the major beta-barrel assembly pathway that is responsible for biogenesis of all outer membrane beta-barrel proteins, and acts in a late step after the SAM complex. The mdm10-mdm12-mmm1 subcomplex further acts in the TOM40-specific pathway after the action of the mdm12-mmm1 complex. Essential for establishing and maintaining the structure of mitochondria and maintenance of mtDNA nucleoids. This Talaromyces marneffei (strain ATCC 18224 / CBS 334.59 / QM 7333) (Penicillium marneffei) protein is Maintenance of mitochondrial morphology protein 1.